A 1270-amino-acid polypeptide reads, in one-letter code: Glycine betaine reductase ATRR (1270 aa).

The interval 14–418 (FTQQVRASPN…MIKLRGYSVV (405 aa)) is adenylation (A) domain. In terms of domain architecture, Carrier spans 528-605 (KEDPIGIEDI…GHLDTVRAIR (78 aa)). Position 565 is an O-(pantetheine 4'-phosphoryl)serine (Ser565). The segment at 643 to 937 (KTVLLTGVTG…EPLSWDDWVA (295 aa)) is carboxylic acid reductase domain R1. Residues 1026-1256 (PLSGKVAVVT…IYALRQPEHV (231 aa)) are aldehyde reductase domain R2.

It belongs to the NRP synthetase family.

The tetramethylammonium ion, which mimics the head group of glycine betaine, acts as a competitive inhibitor of ATRR A domain, whereas the potency decreased by three orders of magnitude with dimethylammonium. Choline is a mixed inhibitor for both glycine betaine reductase and aldehyde reductase activity but more potent in competition against glycine betaine in the first reduction step. Therefore, choline could act as a feedback inhibitor to regulate ATRR enzymatic activity. The lowered binding affinity of choline to R2 favors the release of choline after glycine betaine aldehyde reduction to avoid direct product inhibition. Its function is as follows. NRPS-like enzyme with an unusual domain architecture that converts back glycine betaine to choline via a 2-step reduction mechanism, and thereby can be an alternative source of choline. Permits direct reutilization of endogenously stored glycine betaine for on-demand biosynthesis of choline and choline derivatives, including phospholipid phosphatidylcholine (PC) which has an essential role in maintaining membrane integrity and functionality, or choline-O-sulfate, a mean for intracellular sulfate storage. Glycine betaine is activated by the adenylation (A) domain, and transferred to the thiolation (T) domain. Movement of the phosphopantetheine arm to the thioester reductase domain R1 then allows thioester reduction by NADPH of glycine betainoyl thioester to glycine betaine aldehyde, which is in turn reduced to choline by the aldehyde reductase domain R2. The sequence is that of Glycine betaine reductase ATRR from Emericella nidulans (strain FGSC A4 / ATCC 38163 / CBS 112.46 / NRRL 194 / M139) (Aspergillus nidulans).